The following is a 507-amino-acid chain: Arabinose import ATP-binding protein AraG (507 aa).

2 consecutive ABC transporter domains span residues 14-249 (LRFN…MVGR) and 249-505 (RDIQ…LPRT). ATP is bound at residue 46–53 (GENGAGKS).

It belongs to the ABC transporter superfamily. Arabinose importer (TC 3.A.1.2.2) family. In terms of assembly, the complex is composed of two ATP-binding proteins (AraG), two transmembrane proteins (AraH) and a solute-binding protein (AraF).

The protein resides in the cell inner membrane. It carries out the reaction L-arabinose(out) + ATP + H2O = L-arabinose(in) + ADP + phosphate + H(+). In terms of biological role, part of the ABC transporter complex AraFGH involved in arabinose import. Responsible for energy coupling to the transport system. In Pseudomonas syringae pv. syringae (strain B728a), this protein is Arabinose import ATP-binding protein AraG.